A 702-amino-acid chain; its full sequence is Lipase maturation factor 2 (702 aa).

The next 10 helical transmembrane spans lie at 10–30, 75–95, 102–122, 123–143, 164–184, 226–246, 259–279, 316–336, 363–383, and 396–416; these read LFLQ…YTQI, AQGL…ALLL, FIYL…QVFL, YFQW…VAPL, DLPF…SGVV, LSVV…FAPI, LLQI…LTLV, LMLE…YFGL, VTLP…LIAL, and FFAG…FLIS. N-linked (GlcNAc...) asparagine glycosylation occurs at N488. A helical membrane pass occupies residues 628 to 648; it reads QLSPLEPSILLWGLLGAVVAI. A disordered region spans residues 660-702; it reads LQSSKQTREEKRKQAPKKDSRAVSEQTAPNSNSNGSWAPRRKK. The segment covering 665–681 has biased composition (basic and acidic residues); it reads QTREEKRKQAPKKDSRA. The span at 682–695 shows a compositional bias: polar residues; the sequence is VSEQTAPNSNSNGS.

The protein belongs to the lipase maturation factor family.

The protein localises to the endoplasmic reticulum membrane. Involved in the maturation of specific proteins in the endoplasmic reticulum. May be required for maturation and transport of active lipoprotein lipase (LPL) through the secretory pathway. The polypeptide is Lipase maturation factor 2 (Lmf2) (Rattus norvegicus (Rat)).